A 208-amino-acid polypeptide reads, in one-letter code: Putative archaetidylserine decarboxylase proenzyme (208 aa).

Ser172 serves as the catalytic Schiff-base intermediate with substrate; via pyruvic acid. The residue at position 172 (Ser172) is a Pyruvic acid (Ser); by autocatalysis.

Belongs to the phosphatidylserine decarboxylase family. PSD-A subfamily. In terms of assembly, heterodimer of a large membrane-associated beta subunit and a small pyruvoyl-containing alpha subunit. Pyruvate serves as cofactor. Is synthesized initially as an inactive proenzyme. Formation of the active enzyme involves a self-maturation process in which the active site pyruvoyl group is generated from an internal serine residue via an autocatalytic post-translational modification. Two non-identical subunits are generated from the proenzyme in this reaction, and the pyruvate is formed at the N-terminus of the alpha chain, which is derived from the carboxyl end of the proenzyme. The post-translation cleavage follows an unusual pathway, termed non-hydrolytic serinolysis, in which the side chain hydroxyl group of the serine supplies its oxygen atom to form the C-terminus of the beta chain, while the remainder of the serine residue undergoes an oxidative deamination to produce ammonia and the pyruvoyl prosthetic group on the alpha chain.

It is found in the cell membrane. It catalyses the reaction archaetidylserine + H(+) = archaetidylethanolamine + CO2. In terms of biological role, catalyzes the formation of archaetidylethanolamine (PtdEtn) from archaetidylserine (PtdSer). The protein is Putative archaetidylserine decarboxylase proenzyme of Methanosarcina mazei (strain ATCC BAA-159 / DSM 3647 / Goe1 / Go1 / JCM 11833 / OCM 88) (Methanosarcina frisia).